The primary structure comprises 448 residues: Tubby-like F-box protein 3 (448 aa).

One can recognise an F-box domain in the interval 56-102 (ESRWASLPPELLREVIRRLEADESTWPSRRNVVCFAAVCRTWREMCK). Residues 387-403 (PSPPPAGAPTPSQPGPA) are compositionally biased toward pro residues. The segment at 387 to 406 (PSPPPAGAPTPSQPGPADPE) is disordered.

The protein belongs to the TUB family. Expressed in roots, leaves, flowers and seeds.

This is Tubby-like F-box protein 3 (TULP3) from Oryza sativa subsp. japonica (Rice).